The primary structure comprises 146 residues: Suppressor APC domain-containing protein 1 (146 aa).

Residues 121–146 (HRKGVTQSTGEVVSQAPPGPKGPTLV) are disordered. The segment covering 137 to 146 (PPGPKGPTLV) has biased composition (pro residues).

This is Suppressor APC domain-containing protein 1 (Sapcd1) from Mus musculus (Mouse).